Reading from the N-terminus, the 94-residue chain is Large ribosomal subunit protein bL28 (94 aa).

The protein belongs to the bacterial ribosomal protein bL28 family.

The sequence is that of Large ribosomal subunit protein bL28 from Maricaulis maris (strain MCS10) (Caulobacter maris).